A 229-amino-acid chain; its full sequence is Demethylmenaquinone methyltransferase (229 aa).

S-adenosyl-L-methionine contacts are provided by residues Thr57, Asp77, and 101 to 102 (DV).

The protein belongs to the class I-like SAM-binding methyltransferase superfamily. MenG/UbiE family.

The enzyme catalyses a 2-demethylmenaquinol + S-adenosyl-L-methionine = a menaquinol + S-adenosyl-L-homocysteine + H(+). It participates in quinol/quinone metabolism; menaquinone biosynthesis; menaquinol from 1,4-dihydroxy-2-naphthoate: step 2/2. Functionally, methyltransferase required for the conversion of demethylmenaquinol (DMKH2) to menaquinol (MKH2). This chain is Demethylmenaquinone methyltransferase, found in Chlamydia trachomatis serovar A (strain ATCC VR-571B / DSM 19440 / HAR-13).